A 102-amino-acid polypeptide reads, in one-letter code: Ferredoxin-thioredoxin reductase, catalytic chain (102 aa).

Residue cysteine 53 participates in [4Fe-4S] cluster binding. Cysteine 55 acts as the Nucleophile in catalysis. A disulfide bond links cysteine 55 and cysteine 85. Positions 72, 74, and 83 each coordinate [4Fe-4S] cluster.

The protein belongs to the ferredoxin thioredoxin reductase beta subunit family. In terms of assembly, heterodimer of subunit A (variable subunit) and subunit B (catalytic subunit). Heterodimeric FTR forms a complex with ferredoxin and thioredoxin. Requires [4Fe-4S] cluster as cofactor.

It is found in the plastid. Its subcellular location is the chloroplast. It catalyses the reaction [thioredoxin]-disulfide + 2 reduced [2Fe-2S]-[ferredoxin] + 2 H(+) = [thioredoxin]-dithiol + 2 oxidized [2Fe-2S]-[ferredoxin]. Catalytic subunit of the ferredoxin-thioredoxin reductase (FTR), which catalyzes the two-electron reduction of thioredoxins by the electrons provided by reduced ferredoxin. The chain is Ferredoxin-thioredoxin reductase, catalytic chain (ftrB) from Guillardia theta (Cryptophyte).